Here is a 1603-residue protein sequence, read N- to C-terminus: Transcription factor Gibbin (1603 aa).

4 disordered regions span residues 19 to 108 (PDYL…SSSR), 150 to 236 (LRLS…STDY), 264 to 285 (LEPP…FLDP), and 394 to 467 (CRRR…RKGK). Pro residues predominate over residues 30 to 47 (GGPPTPRPLLPTRPPASP). N6-acetyllysine is present on K79. The segment covering 166–178 (SFFSSPSLANSIR) has biased composition (polar residues). Positions 179–194 (SPEERATPHAKSERPS) are enriched in basic and acidic residues. Residues 216–225 (PGATAAATGL) show a composition bias toward low complexity. S268 is modified (phosphoserine). Low complexity predominate over residues 273-285 (PQLLDPQPRFLDP). The a.T hook 1 DNA-binding region spans 396 to 408 (RRKAGRGRKADAG). The segment covering 428 to 446 (EPPPPPPPPPPALPGPGPV) has biased composition (pro residues). Residues 544–556 (KRKRGRPPKNLLL) constitute a DNA-binding region (a.T hook 2). Residues 581–607 (MPEVKKRRRRKQKLASPQPSYAADAND) are disordered. The residue at position 596 (S596) is a Phosphoserine. A Glycyl lysine isopeptide (Lys-Gly) (interchain with G-Cter in SUMO2) cross-link involves residue K609. Disordered stretches follow at residues 717–792 (LTEL…RNCG) and 806–827 (LESG…GQTE). Basic residues predominate over residues 737-746 (KPKRKRRSRK). The segment covering 816 to 827 (YYSTGAPSGQTE) has biased composition (polar residues). Phosphoserine is present on residues S829 and S846. Position 891 is an omega-N-methylarginine (R891). Phosphoserine occurs at positions 896 and 1064. Disordered stretches follow at residues 1159 to 1198 (VSET…QSSL) and 1253 to 1286 (ASAA…KKER). 2 stretches are compositionally biased toward low complexity: residues 1160–1171 (SETFSESSSDST) and 1187–1198 (SEASSSEGQSSL). Phosphoserine is present on S1187. Phosphoserine is present on residues S1322, S1324, and S1399. T1401 carries the post-translational modification Phosphothreonine. S1403 is modified (phosphoserine). A Glycyl lysine isopeptide (Lys-Gly) (interchain with G-Cter in SUMO2) cross-link involves residue K1409. The segment at 1503–1533 (PHLASPPATPKADKEPLEMARPPGPPRGPAA) is disordered. Residues S1507 and S1549 each carry the phosphoserine modification.

It is found in the nucleus. It localises to the chromosome. Functionally, transcription factor required for the proper patterning of the epidermis, which plays a key role in early epithelial morphogenesis. Directly binds promoter and enhancer regions and acts by maintaining local enhancer-promoter chromatin architecture. Interacts with many sequence-specific zinc-finger transcription factors and methyl-CpG-binding proteins to regulate the expression of mesoderm genes that wire surface ectoderm stratification. This chain is Transcription factor Gibbin, found in Homo sapiens (Human).